The sequence spans 304 residues: Energy-coupling factor transporter ATP-binding protein EcfA2 (304 aa).

The ABC transporter domain occupies 11 to 260 (LKADEILAVS…QTFLEKTTIV (250 aa)). 54 to 61 (GDSGSGKS) lines the ATP pocket.

Belongs to the ABC transporter superfamily. Energy-coupling factor EcfA family. Forms a stable energy-coupling factor (ECF) transporter complex composed of 2 membrane-embedded substrate-binding proteins (S component), 2 ATP-binding proteins (A component) and 2 transmembrane proteins (T component).

The protein localises to the cell membrane. Its function is as follows. ATP-binding (A) component of a common energy-coupling factor (ECF) ABC-transporter complex. Unlike classic ABC transporters this ECF transporter provides the energy necessary to transport a number of different substrates. The polypeptide is Energy-coupling factor transporter ATP-binding protein EcfA2 (Mycoplasma genitalium (strain ATCC 33530 / DSM 19775 / NCTC 10195 / G37) (Mycoplasmoides genitalium)).